A 394-amino-acid polypeptide reads, in one-letter code: Protein TsgA homolog (394 aa).

The next 12 membrane-spanning stretches (helical) occupy residues 11-31 (WISY…GIVM), 51-71 (FLNA…EIIP), 76-96 (LVFG…GHNL), 101-121 (ISMF…TFLV), 134-154 (LLFT…AAAM), 162-182 (WYWV…LTLC), 206-226 (VGVL…LGFI), 246-266 (QLVS…SFIL), 274-294 (IVTV…STDN), 302-322 (ILAL…LGSL), 334-354 (FILT…GPIV), and 363-383 (LATA…LGFF).

It belongs to the major facilitator superfamily. TsgA family.

Its subcellular location is the cell inner membrane. The polypeptide is Protein TsgA homolog (Yersinia pseudotuberculosis serotype O:1b (strain IP 31758)).